We begin with the raw amino-acid sequence, 152 residues long: 6,7-dimethyl-8-ribityllumazine synthase (152 aa).

Residues Phe21, Ala55–Glu57, and Cys79–Ile81 each bind 5-amino-6-(D-ribitylamino)uracil. Ala84 to Thr85 contacts (2S)-2-hydroxy-3-oxobutyl phosphate. His87 acts as the Proton donor in catalysis. Residue Phe112 coordinates 5-amino-6-(D-ribitylamino)uracil. Residue Arg126 coordinates (2S)-2-hydroxy-3-oxobutyl phosphate.

The protein belongs to the DMRL synthase family. In terms of assembly, forms an icosahedral capsid composed of 60 subunits, arranged as a dodecamer of pentamers.

The catalysed reaction is (2S)-2-hydroxy-3-oxobutyl phosphate + 5-amino-6-(D-ribitylamino)uracil = 6,7-dimethyl-8-(1-D-ribityl)lumazine + phosphate + 2 H2O + H(+). The protein operates within cofactor biosynthesis; riboflavin biosynthesis; riboflavin from 2-hydroxy-3-oxobutyl phosphate and 5-amino-6-(D-ribitylamino)uracil: step 1/2. Catalyzes the formation of 6,7-dimethyl-8-ribityllumazine by condensation of 5-amino-6-(D-ribitylamino)uracil with 3,4-dihydroxy-2-butanone 4-phosphate. This is the penultimate step in the biosynthesis of riboflavin. The polypeptide is 6,7-dimethyl-8-ribityllumazine synthase (Staphylococcus carnosus (strain TM300)).